A 314-amino-acid chain; its full sequence is Methionyl-tRNA formyltransferase (314 aa).

Residue 110 to 113 (SLLP) coordinates (6S)-5,6,7,8-tetrahydrofolate.

Belongs to the Fmt family.

The catalysed reaction is L-methionyl-tRNA(fMet) + (6R)-10-formyltetrahydrofolate = N-formyl-L-methionyl-tRNA(fMet) + (6S)-5,6,7,8-tetrahydrofolate + H(+). Functionally, attaches a formyl group to the free amino group of methionyl-tRNA(fMet). The formyl group appears to play a dual role in the initiator identity of N-formylmethionyl-tRNA by promoting its recognition by IF2 and preventing the misappropriation of this tRNA by the elongation apparatus. The chain is Methionyl-tRNA formyltransferase from Lactobacillus johnsonii (strain CNCM I-12250 / La1 / NCC 533).